The chain runs to 204 residues: Putative AgrB-like protein (204 aa).

Helical transmembrane passes span 40–60, 87–107, 111–131, and 156–176; these read IILINVMKFAIVYGISLATGL, LNCTLISLAMFVLAPFVFQNI, NWIVLGTFAFILLNMFLFAPA, and LILTGIALLIPFAEMKTLIMV.

This sequence belongs to the AgrB family.

The protein localises to the cell membrane. Its function is as follows. May be involved in the proteolytic processing of a quorum sensing system signal molecule precursor. The chain is Putative AgrB-like protein from Listeria welshimeri serovar 6b (strain ATCC 35897 / DSM 20650 / CCUG 15529 / CIP 8149 / NCTC 11857 / SLCC 5334 / V8).